The chain runs to 315 residues: Methylglutaconyl-CoA hydratase, mitochondrial (315 aa).

A mitochondrion-targeting transit peptide spans 1–43; the sequence is MAAAAAPGALGALSAGRVRLVAACCARLGSAAWARGTAPRRGY. Position 76 is an N6-acetyllysine; alternate (Lys-76). Residue Lys-76 is modified to N6-succinyllysine; alternate. Positions 81 to 95 are RNA-binding; sequence KNLLKMLSKAVDALK. Residue Lys-85 is modified to N6-succinyllysine. Residues Lys-89 and Lys-120 each carry the N6-acetyllysine; alternate modification. N6-succinyllysine; alternate is present on residues Lys-89 and Lys-120. Residues Lys-124 and Lys-136 each carry the N6-succinyllysine modification. Residues Lys-180 and Lys-187 each carry the N6-acetyllysine; alternate modification. N6-succinyllysine; alternate is present on residues Lys-180 and Lys-187. Lys-305 carries the post-translational modification N6-succinyllysine.

The protein belongs to the enoyl-CoA hydratase/isomerase family. Homohexamer.

It localises to the mitochondrion. The catalysed reaction is (3S)-3-hydroxy-3-methylglutaryl-CoA = 3-methyl-(2E)-glutaconyl-CoA + H2O. It catalyses the reaction (3S)-citramalyl-CoA = itaconyl-CoA + H2O. It carries out the reaction 3-hydroxyisovaleryl-CoA = 3-methylbut-2-enoyl-CoA + H2O. The enzyme catalyses (S)-3-hydroxyglutaryl-CoA = (2E)-glutaconyl-CoA + H2O. Its pathway is amino-acid degradation; L-leucine degradation; (S)-3-hydroxy-3-methylglutaryl-CoA from 3-isovaleryl-CoA: step 3/3. Catalyzes the fifth step in the leucine degradation pathway, the reversible hydration of 3-methylglutaconyl-CoA (3-MG-CoA) to 3-hydroxy-3-methylglutaryl-CoA (HMG-CoA). Can catalyze the reverse reaction but at a much lower rate in vitro. HMG-CoA is then quickly degraded by another enzyme (such as HMG-CoA lyase) to give acetyl-CoA and acetoacetate. Uses other substrates such as (2E)-glutaconyl-CoA efficiently in vitro, and to a lesser extent 3-methylcrotonyl-CoA (3-methyl-(2E)-butenoyl-CoA), crotonyl-CoA ((2E)-butenoyl-CoA) and 3-hydroxybutanoyl-CoA (the missing carboxylate reduces affinity to the active site). Originally it was identified as an RNA-binding protein as it binds to AU-rich elements (AREs) in vitro. AREs direct rapid RNA degradation and mRNA deadenylation. Might have itaconyl-CoA hydratase activity, converting itaconyl-CoA into citramalyl-CoA in the C5-dicarboxylate catabolism pathway. The C5-dicarboxylate catabolism pathway is required to detoxify itaconate, an antimicrobial metabolite and immunomodulator produced by macrophages during certain infections, that can act as a vitamin B12-poisoning metabolite. This Rattus norvegicus (Rat) protein is Methylglutaconyl-CoA hydratase, mitochondrial.